The primary structure comprises 482 residues: Transcription termination/antitermination protein NusA (482 aa).

In terms of domain architecture, S1 motif spans asparagine 133–threonine 197. Positions leucine 300–valine 446 constitute a KH domain.

The protein belongs to the NusA family. In terms of assembly, monomer. Binds directly to the core enzyme of the DNA-dependent RNA polymerase and to nascent RNA.

Its subcellular location is the cytoplasm. In terms of biological role, participates in both transcription termination and antitermination. The sequence is that of Transcription termination/antitermination protein NusA from Borreliella burgdorferi (strain ATCC 35210 / DSM 4680 / CIP 102532 / B31) (Borrelia burgdorferi).